We begin with the raw amino-acid sequence, 89 residues long: DNA/RNA-binding protein Alba 1 (89 aa).

This sequence belongs to the histone-like Alba family.

The protein localises to the cytoplasm. It is found in the chromosome. Its function is as follows. Binds double-stranded DNA tightly but without sequence specificity. Involved in DNA compaction. In Archaeoglobus fulgidus (strain ATCC 49558 / DSM 4304 / JCM 9628 / NBRC 100126 / VC-16), this protein is DNA/RNA-binding protein Alba 1.